Reading from the N-terminus, the 331-residue chain is Cytosolic sulfotransferase 8 (331 aa).

Over residues 1 to 11 the composition is skewed to basic and acidic residues; that stretch reads MGEKDIPRNLK. Residues 1–31 are disordered; that stretch reads MGEKDIPRNLKEEEEEEEENQSEETKSLISS. The segment covering 12-22 has biased composition (acidic residues); the sequence is EEEEEEEENQS. Residue 80 to 85 coordinates 3'-phosphoadenylyl sulfate; the sequence is KSGTTW. The Proton acceptor role is filled by histidine 145. 3'-phosphoadenylyl sulfate contacts are provided by residues arginine 167, serine 175, tyrosine 231, and 297–299; that span reads RKG.

Belongs to the sulfotransferase 1 family. Expressed in seedlings and roots.

The protein localises to the cytoplasm. In terms of biological role, sulfotransferase that utilizes 3'-phospho-5'-adenylyl sulfate (PAPS) as sulfonate donor. No activity with brassinosteroids. This Arabidopsis thaliana (Mouse-ear cress) protein is Cytosolic sulfotransferase 8 (SOT8).